A 153-amino-acid polypeptide reads, in one-letter code: Bifunctional protein GAL10 (153 aa).

The interval 1–153 (MSDDIFLVTG…IPIPEHCPME (153 aa)) is galactowaldenase.

It in the N-terminal section; belongs to the NAD(P)-dependent epimerase/dehydratase family. This sequence in the C-terminal section; belongs to the aldose epimerase family. NAD(+) serves as cofactor.

It catalyses the reaction UDP-alpha-D-glucose = UDP-alpha-D-galactose. The catalysed reaction is alpha-D-glucose = beta-D-glucose. It participates in carbohydrate metabolism; galactose metabolism. Its pathway is carbohydrate metabolism; hexose metabolism. Its function is as follows. Mutarotase converts alpha-aldose to the beta-anomer. It is active on D-glucose, L-arabinose, D-xylose, D-galactose, maltose and lactose. The protein is Bifunctional protein GAL10 (GAL10) of Candida maltosa (Yeast).